The sequence spans 102 residues: Small ribosomal subunit protein uS10 (102 aa).

This sequence belongs to the universal ribosomal protein uS10 family. Part of the 30S ribosomal subunit.

In terms of biological role, involved in the binding of tRNA to the ribosomes. This is Small ribosomal subunit protein uS10 from Streptococcus thermophilus (strain ATCC BAA-491 / LMD-9).